A 445-amino-acid chain; its full sequence is Tubulin beta chain (445 aa).

Residues Gln11, Glu69, Ser138, Gly142, Thr143, Gly144, Asn204, and Asn226 each coordinate GTP. Glu69 is a Mg(2+) binding site.

Belongs to the tubulin family. In terms of assembly, dimer of alpha and beta chains. A typical microtubule is a hollow water-filled tube with an outer diameter of 25 nm and an inner diameter of 15 nM. Alpha-beta heterodimers associate head-to-tail to form protofilaments running lengthwise along the microtubule wall with the beta-tubulin subunit facing the microtubule plus end conferring a structural polarity. Microtubules usually have 13 protofilaments but different protofilament numbers can be found in some organisms and specialized cells. Mg(2+) is required as a cofactor.

The protein localises to the cytoplasm. Its subcellular location is the cytoskeleton. Its function is as follows. Tubulin is the major constituent of microtubules, a cylinder consisting of laterally associated linear protofilaments composed of alpha- and beta-tubulin heterodimers. Microtubules grow by the addition of GTP-tubulin dimers to the microtubule end, where a stabilizing cap forms. Below the cap, tubulin dimers are in GDP-bound state, owing to GTPase activity of alpha-tubulin. This chain is Tubulin beta chain, found in Coprinopsis cinerea (strain Okayama-7 / 130 / ATCC MYA-4618 / FGSC 9003) (Inky cap fungus).